The following is a 280-amino-acid chain: Bis(5'-nucleosyl)-tetraphosphatase, symmetrical (280 aa).

This sequence belongs to the Ap4A hydrolase family.

The catalysed reaction is P(1),P(4)-bis(5'-adenosyl) tetraphosphate + H2O = 2 ADP + 2 H(+). Functionally, hydrolyzes diadenosine 5',5'''-P1,P4-tetraphosphate to yield ADP. The protein is Bis(5'-nucleosyl)-tetraphosphatase, symmetrical of Paracidovorax citrulli (strain AAC00-1) (Acidovorax citrulli).